Consider the following 283-residue polypeptide: Pantothenate synthetase (283 aa).

M30–H37 is an ATP binding site. H37 acts as the Proton donor in catalysis. Residue Q61 participates in (R)-pantoate binding. Q61 is a binding site for beta-alanine. G149–D152 serves as a coordination point for ATP. Q155 contacts (R)-pantoate. L186–R189 provides a ligand contact to ATP.

This sequence belongs to the pantothenate synthetase family. In terms of assembly, homodimer.

Its subcellular location is the cytoplasm. It carries out the reaction (R)-pantoate + beta-alanine + ATP = (R)-pantothenate + AMP + diphosphate + H(+). It functions in the pathway cofactor biosynthesis; (R)-pantothenate biosynthesis; (R)-pantothenate from (R)-pantoate and beta-alanine: step 1/1. Catalyzes the condensation of pantoate with beta-alanine in an ATP-dependent reaction via a pantoyl-adenylate intermediate. The chain is Pantothenate synthetase from Escherichia coli O6:K15:H31 (strain 536 / UPEC).